The sequence spans 509 residues: H/ACA ribonucleoprotein complex subunit DKC1 (509 aa).

The interval 1 to 24 (MADAEVITFPKKHKKKKDRKPLQE) is disordered. An N-acetylalanine modification is found at alanine 2. A nucleolar localization region spans residues 2–21 (ADAEVITFPKKHKKKKDRKP). The segment covering 10–19 (PKKHKKKKDR) has biased composition (basic residues). Residues lysine 20, lysine 39, and lysine 43 each participate in a glycyl lysine isopeptide (Lys-Gly) (interchain with G-Cter in SUMO2) cross-link. The Nucleophile role is filled by aspartate 125. Lysine 191 participates in a covalent cross-link: Glycyl lysine isopeptide (Lys-Gly) (interchain with G-Cter in SUMO2). Residues 297–372 (KRLVMKDSAV…VAKIKRVIME (76 aa)) form the PUA domain. The residue at position 387 (serine 387) is a Phosphoserine. Residue lysine 394 forms a Glycyl lysine isopeptide (Lys-Gly) (interchain with G-Cter in SUMO2) linkage. Lysine 413 participates in a covalent cross-link: Glycyl lysine isopeptide (Lys-Gly) (interchain with G-Cter in SUMO1); alternate. Lysine 413 participates in a covalent cross-link: Glycyl lysine isopeptide (Lys-Gly) (interchain with G-Cter in SUMO2); alternate. A Glycyl lysine isopeptide (Lys-Gly) (interchain with G-Cter in SUMO2) cross-link involves residue lysine 424. The nuclear and nucleolar localization stretch occupies residues 446-509 (KRKRDSESES…KVKVVEEMSE (64 aa)). Positions 447-509 (RKRDSESESD…KVKVVEEMSE (63 aa)) are disordered. Phosphoserine is present on residues serine 451, serine 453, and serine 455. The residue at position 458 (threonine 458) is a Phosphothreonine. Residues 466 to 476 (EKKKKKDKKPK) show a composition bias toward basic residues. Serine 481 is modified (phosphoserine). Threonine 485 is modified (phosphothreonine). Position 508 is a phosphoserine (serine 508).

The protein belongs to the pseudouridine synthase TruB family. In terms of assembly, part of the H/ACA small nucleolar ribonucleoprotein (H/ACA snoRNP) complex, which contains NHP2/NOLA2, GAR1/NOLA1, NOP10/NOLA3, and DKC1/NOLA4, which is presumed to be the catalytic subunit. The complex contains a stable core formed by binding of one or two NOP10-DKC1 heterodimers to NHP2; GAR1 subsequently binds to this core via DKC1. The complex binds a box H/ACA small nucleolar RNA (snoRNA), which may target the specific site of modification within the RNA substrate. During assembly, the complex contains NAF1 instead of GAR1/NOLA1. The complex also interacts with TERC, which contains a 3'-terminal domain related to the box H/ACA snoRNAs. Specific interactions with snoRNAs or TERC are mediated by GAR1 and NHP2. Associates with NOLC1/NOPP140. H/ACA snoRNPs interact with the SMN complex, consisting of SMN1 or SMN2, GEMIN2/SIP1, DDX20/GEMIN3, and GEMIN4. This is mediated by interaction between GAR1 and SMN1 or SMN2. The SMN complex may be required for correct assembly of the H/ACA snoRNP complex. Component of the telomerase holoenzyme complex composed of one molecule of TERT, one molecule of WRAP53/TCAB1, two molecules of H/ACA ribonucleoprotein complex subunits DKC1, NOP10, NHP2 and GAR1, and a telomerase RNA template component (TERC). The telomerase holoenzyme complex is associated with TEP1, SMG6/EST1A and POT1. Interacts with SHQ1; this interaction may lead to the stabilization of DKC1, from the time of its synthesis until its association with NOP10, NHP2, and NAF1 at the nascent H/ACA RNA. Interacts with HMBOX1. Interacts with DHX36. Ubiquitously expressed, with elevated levels in Purkinje cells, the olfactory bulb, and Leydig cells of the testis.

It is found in the nucleus. The protein resides in the nucleolus. Its subcellular location is the cajal body. It catalyses the reaction uridine in 5S rRNA = pseudouridine in 5S rRNA. Its function is as follows. Catalytic subunit of H/ACA small nucleolar ribonucleoprotein (H/ACA snoRNP) complex, which catalyzes pseudouridylation of rRNA. This involves the isomerization of uridine such that the ribose is subsequently attached to C5, instead of the normal N1. Each rRNA can contain up to 100 pseudouridine ('psi') residues, which may serve to stabilize the conformation of rRNAs. Required for ribosome biogenesis and telomere maintenance. Also required for correct processing or intranuclear trafficking of TERC, the RNA component of the telomerase reverse transcriptase (TERT) holoenzyme. This is H/ACA ribonucleoprotein complex subunit DKC1 (Dkc1) from Mus musculus (Mouse).